A 493-amino-acid polypeptide reads, in one-letter code: Glycerol kinase (493 aa).

ADP is bound at residue T11. 3 residues coordinate ATP: T11, T12, and S13. Position 11 (T11) interacts with sn-glycerol 3-phosphate. R15 contributes to the ADP binding site. Sn-glycerol 3-phosphate-binding residues include R80, E81, Y132, and D241. Glycerol contacts are provided by R80, E81, Y132, D241, and Q242. T263 and G306 together coordinate ADP. ATP contacts are provided by T263, G306, Q310, and G408. ADP is bound at residue G408.

Belongs to the FGGY kinase family.

The catalysed reaction is glycerol + ATP = sn-glycerol 3-phosphate + ADP + H(+). It participates in polyol metabolism; glycerol degradation via glycerol kinase pathway; sn-glycerol 3-phosphate from glycerol: step 1/1. Its activity is regulated as follows. Inhibited by fructose 1,6-bisphosphate (FBP). Its function is as follows. Key enzyme in the regulation of glycerol uptake and metabolism. Catalyzes the phosphorylation of glycerol to yield sn-glycerol 3-phosphate. This chain is Glycerol kinase, found in Cereibacter sphaeroides (strain ATCC 17029 / ATH 2.4.9) (Rhodobacter sphaeroides).